A 595-amino-acid chain; its full sequence is Glutamyl-tRNA(Gln) amidotransferase subunit B, mitochondrial (595 aa).

Residues 1–72 (MPRLWYSRYL…RAKSQSRNGR (72 aa)) constitute a mitochondrion transit peptide.

The protein belongs to the GatB/GatE family. GatB subfamily. In terms of assembly, subunit of the heterotrimeric GatCAB amidotransferase (AdT) complex, composed of A, B and C subunits.

It localises to the mitochondrion. The catalysed reaction is L-glutamyl-tRNA(Gln) + L-glutamine + ATP + H2O = L-glutaminyl-tRNA(Gln) + L-glutamate + ADP + phosphate + H(+). In terms of biological role, allows the formation of correctly charged Gln-tRNA(Gln) through the transamidation of misacylated Glu-tRNA(Gln) in the mitochondria. The reaction takes place in the presence of glutamine and ATP through an activated gamma-phospho-Glu-tRNA(Gln). The sequence is that of Glutamyl-tRNA(Gln) amidotransferase subunit B, mitochondrial from Talaromyces marneffei (strain ATCC 18224 / CBS 334.59 / QM 7333) (Penicillium marneffei).